We begin with the raw amino-acid sequence, 333 residues long: D-lactate dehydrogenase (333 aa).

NAD(+)-binding positions include 156–157 (HI), Asp-176, 207–208 (VP), Asn-213, 234–236 (VSR), and Asp-260. Residue Arg-236 is part of the active site. Glu-265 is a catalytic residue. His-297 (proton donor) is an active-site residue.

The protein belongs to the D-isomer specific 2-hydroxyacid dehydrogenase family. In terms of assembly, homodimer.

The enzyme catalyses (R)-lactate + NAD(+) = pyruvate + NADH + H(+). The sequence is that of D-lactate dehydrogenase (ldhA) from Lactobacillus delbrueckii subsp. bulgaricus (strain ATCC 11842 / DSM 20081 / BCRC 10696 / JCM 1002 / NBRC 13953 / NCIMB 11778 / NCTC 12712 / WDCM 00102 / Lb 14).